Here is a 311-residue protein sequence, read N- to C-terminus: Malate dehydrogenase (311 aa).

NAD(+)-binding positions include 7-12 and Asp32; that span reads GAGNVG. The substrate site is built by Arg82 and Arg88. NAD(+) is bound by residues Asn95 and 118-120; that span reads VSN. The substrate site is built by Asn120 and Arg151. The active-site Proton acceptor is the His175.

Belongs to the LDH/MDH superfamily. MDH type 3 family. As to quaternary structure, homotetramer.

The enzyme catalyses (S)-malate + NAD(+) = oxaloacetate + NADH + H(+). With respect to regulation, strongly inhibited by iodoacetic acid and CuCl(2). Completely inhibited by N-ethylmaleimide and HgCl(2). Its function is as follows. Catalyzes the reversible oxidation of malate to oxaloacetate. Can use both NAD and NADP for malate oxidation, but NADPH cannot be used for oxaloacetate reduction. This chain is Malate dehydrogenase, found in Flavobacterium frigidimaris.